Here is a 731-residue protein sequence, read N- to C-terminus: Inducible ornithine decarboxylase (731 aa).

The residue at position 356 (K356) is an N6-(pyridoxal phosphate)lysine.

It belongs to the Orn/Lys/Arg decarboxylase class-I family. As to quaternary structure, dodecamer. It depends on pyridoxal 5'-phosphate as a cofactor.

It carries out the reaction L-ornithine + H(+) = putrescine + CO2. This Lactobacillus sp. (strain 30a) protein is Inducible ornithine decarboxylase (odcI).